Reading from the N-terminus, the 557-residue chain is 2-isopropylmalate synthase (557 aa).

The region spanning 31–304 (PTWCSVDLRD…DPGLNFASML (274 aa)) is the Pyruvate carboxyltransferase domain. Residues Asp40, His243, His245, and Asn279 each contribute to the Mg(2+) site. Residues 439–557 (IENPIKFLNF…NTMIKDSAAV (119 aa)) form a regulatory domain region.

It belongs to the alpha-IPM synthase/homocitrate synthase family. LeuA type 2 subfamily. In terms of assembly, homodimer. Mg(2+) is required as a cofactor.

Its subcellular location is the cytoplasm. It catalyses the reaction 3-methyl-2-oxobutanoate + acetyl-CoA + H2O = (2S)-2-isopropylmalate + CoA + H(+). It functions in the pathway amino-acid biosynthesis; L-leucine biosynthesis; L-leucine from 3-methyl-2-oxobutanoate: step 1/4. Its function is as follows. Catalyzes the condensation of the acetyl group of acetyl-CoA with 3-methyl-2-oxobutanoate (2-ketoisovalerate) to form 3-carboxy-3-hydroxy-4-methylpentanoate (2-isopropylmalate). This Desulfitobacterium hafniense (strain Y51) protein is 2-isopropylmalate synthase.